The following is a 616-amino-acid chain: Chaperone protein HtpG (616 aa).

The interval 1–333 is a; substrate-binding; sequence MKKQFDTEVN…CQDLPLNVSR (333 aa). The interval 334-542 is b; it reads EILQQNKILS…SNDPTYQMQK (209 aa). Positions 543–616 are c; that stretch reads IMLSMGQEVK…INEFLEKDLL (74 aa).

This sequence belongs to the heat shock protein 90 family. Homodimer.

The protein localises to the cytoplasm. In terms of biological role, molecular chaperone. Has ATPase activity. This is Chaperone protein HtpG from Borreliella afzelii (strain PKo) (Borrelia afzelii).